Consider the following 135-residue polypeptide: Dihydromethanopterin reductase (135 aa).

NADP(+) is bound by residues Ala-9, 16-21 (LGLNGH), 52-54 (PKT), and 93-97 (GGIAV).

In terms of assembly, homodimer.

It catalyses the reaction 5,6,7,8-tetrahydromethanopterin + NAD(+) = 7,8-dihydromethanopterin + NADH + H(+). The enzyme catalyses 5,6,7,8-tetrahydromethanopterin + NADP(+) = 7,8-dihydromethanopterin + NADPH + H(+). Its pathway is cofactor biosynthesis; 5,6,7,8-tetrahydromethanopterin biosynthesis. Functionally, catalyzes the reduction of dihydromethanopterin (H(2)MPT) to tetrahydromethanopterin (H(4)MPT). Shows preference for NADPH rather than NADH as electron donor. Does not reduce dihydrofolate. The polypeptide is Dihydromethanopterin reductase (dmrA) (Methylorubrum extorquens (strain ATCC 14718 / DSM 1338 / JCM 2805 / NCIMB 9133 / AM1) (Methylobacterium extorquens)).